The sequence spans 173 residues: Protein tyrosine phosphatase type IVA 3 (173 aa).

Positions 8-161 (APVEVSYKNM…YRPKQRLRFK (154 aa)) constitute a Tyrosine-protein phosphatase domain. The cysteines at positions 49 and 104 are disulfide-linked. D72 (proton donor) is an active-site residue. The active-site Phosphocysteine intermediate is C104. R110 serves as a coordination point for substrate. C170 is subject to Cysteine methyl ester. C170 carries S-farnesyl cysteine lipidation. Positions 171–173 (CIM) are cleaved as a propeptide — removed in mature form.

It belongs to the protein-tyrosine phosphatase family. As to quaternary structure, interacts with tubulin. Post-translationally, farnesylated. Farnesylation is required for membrane targeting. Unfarnesylated forms are shifted into the nucleus.

The protein localises to the cell membrane. It is found in the early endosome. It carries out the reaction O-phospho-L-tyrosyl-[protein] + H2O = L-tyrosyl-[protein] + phosphate. Inhibited by sodium orthovanadate and peroxovanadium compounds, and by pentamidine. Functionally, protein tyrosine phosphatase which stimulates progression from G1 into S phase during mitosis. Enhances cell proliferation, cell motility and invasive activity, and promotes cancer metastasis. May be involved in the progression of cardiac hypertrophy by inhibiting intracellular calcium mobilization in response to angiotensin II. This chain is Protein tyrosine phosphatase type IVA 3 (PTP4A3), found in Bos taurus (Bovine).